The primary structure comprises 759 residues: MADEAPRKGSFSALVGRTNGLTKPAALAAAPAKPGGAGGSKKLVIKNFRDRPRLPDNYTQDTWRKLHEAVRAVQSSTSIRYNLEELYQAVENLCSHKVSPMLYKQLRQACEDHVQAQILPFREDSLDSVLFLKKINTCWQDHCRQMIMIRSIFLFLDRTYVLQNSTLPSIWDMGLELFRTHIISDKMVQSKTIDGILLLIERERSGEAVDRSLLRSLLGMLSDLQVYKDSFELKFLEETNCLYAAEGQRLMQEREVPEYLNHVSKRLEEEGDRVITYLDHSTQKPLIACVEKQLLGEHLTAILQKGLDHLLDENRVPDLAQMYQLFSRVRGGQQALLQHWSEYIKTFGTAIVINPEKDKDMVQDLLDFKDKVDHVIEVCFQKNERFVNLMKESFETFINKRPNKPAELIAKHVDSKLRAGNKEATDEELERTLDKIMILFRFIHGKDVFEAFYKKDLAKRLLVGKSASVDAEKSMLSKLKHECGAAFTSKLEGMFKDMELSKDIMVHFKQHMQNQSDSGPIDLTVNILTMGYWPTYTPMEVHLTPEMIKLQEVFKAFYLGKHSGRKLQWQTTLGHAVLKAEFKEGKKEFQVSLFQTLVLLMFNEGDGFSFEEIKMATGIEDSELRRTLQSLACGKARVLIKSPKGKEVEDGDKFIFNGEFKHKLFRIKINQIQMKETVEEQVSTTERVFQDRQYQIDAAIVRIMKMRKTLGHNLLVSELYNQLKFPVKPGDLKKRIESLIDRDYMERDKDNPNQYHYVA.

Lys-8 is covalently cross-linked (Glycyl lysine isopeptide (Lys-Gly) (interchain with G-Cter in SUMO2)). Ser-10 carries the phosphoserine modification. Lys-33 is covalently cross-linked (Glycyl lysine isopeptide (Lys-Gly) (interchain with G-Cter in ubiquitin)). One can recognise a Cullin neddylation domain in the interval 691–751; sequence DRQYQIDAAI…RDYMERDKDN (61 aa). Residue Lys-705 forms a Glycyl lysine isopeptide (Lys-Gly) (interchain with G-Cter in NEDD8) linkage.

This sequence belongs to the cullin family. Can self-associate. Component of multiple DCX (DDB1-CUL4-X-box) E3 ubiquitin-protein ligase complexes that seem to consist of DDB1, CUL4A or CUL4B, RBX1 and a variable substrate recognition component which seems to belong to a protein family described as DCAF (Ddb1- and Cul4-associated factor) or CDW (CUL4-DDB1-associated WD40-repeat) proteins. Component of the CSA complex (DCX(ERCC8) complex) containing ERCC8, RBX1, DDB1 and CUL4A; the CSA complex interacts with RNA polymerase II; upon UV irradiation it interacts with the COP9 signalosome and preferentially with the hyperphosphorylated form of RNA polymerase II. Component of the DCX(DET1-COP1) complex with the substrate recognition component DET1 and COP1. Component of the DCX(DDB2) complex with the substrate recognition component DDB2. Component of the DCX(DTL) complex with the putative substrate recognition component DTL. Component of DCX complexes part of the DesCEND (destruction via C-end degrons) pathway, which contain either TRPC4AP or DCAF12 as substrate-recognition component. Component of the DCX(AMBRA1) complex with the substrate recognition component AMBRA1. Interacts with DDB1, RBX1, RNF7, CDT1, TIP120A/CAND1, SKP2, CDKN1B, MDM2, TP53 and HOXA9. Interacts with DDB2; the interactions with DDB2 and CAND1 are mutually exclusive. Interacts with DCAF1, DTL, DDA1, DCAF6, DCAF4, DCAF16, DCAF17, DET1, WDTC1, DCAF5, DCAF11, WDR24A, COP1, PAFAH1B1, ERCC8, GRWD1, FBXW5, RBBP7, GNB2, WSB1, WSB2, NUP43, PWP1, FBXW8, ATG16L1, KATNB1, RBBP4, RBBP5, LRWD1 and DCAF8. May interact with WDR26, WDR51B, SNRNP40, WDR61, WDR76, WDR5. Interacts (when neddylated) with ARIH1; leading to activate the E3 ligase activity of ARIH1. The DDB1-CUL4A complex interacts with CRY1. Interacts (unneddylated form) with DCUN1D1, DCUN1D2, DCUN1D3, DCUN1D4 and DCUN1D5; these interactions promote the cullin neddylation. In terms of assembly, (Microbial infection) Interacts with Epstein-Barr virus BPLF1. Neddylated; required for activity of cullin-RING-based E3 ubiquitin-protein ligase complexes. Deneddylated via its interaction with the COP9 signalosome (CSN) complex. Post-translationally, (Microbial infection) Deneddylated by Epstein-Barr virus BPLF1 leading to a S-phase-like environment that is required for efficient replication of the viral genome.

It functions in the pathway protein modification; protein ubiquitination. Its function is as follows. Core component of multiple cullin-RING-based E3 ubiquitin-protein ligase complexes which mediate the ubiquitination of target proteins. As a scaffold protein may contribute to catalysis through positioning of the substrate and the ubiquitin-conjugating enzyme. The E3 ubiquitin-protein ligase activity of the complex is dependent on the neddylation of the cullin subunit and is inhibited by the association of the deneddylated cullin subunit with TIP120A/CAND1. The functional specificity of the E3 ubiquitin-protein ligase complex depends on the variable substrate recognition component. DCX(DET1-COP1) directs ubiquitination of JUN. DCX(DDB2) directs ubiquitination of XPC. DCX(DDB2) ubiquitinates histones H3-H4 and is required for efficient histone deposition during replication-coupled (H3.1) and replication-independent (H3.3) nucleosome assembly, probably by facilitating the transfer of H3 from ASF1A/ASF1B to other chaperones involved in histone deposition. DCX(DTL) plays a role in PCNA-dependent polyubiquitination of CDT1 and MDM2-dependent ubiquitination of p53/TP53 in response to radiation-induced DNA damage and during DNA replication. DCX(DTL) directs autoubiquitination of DTL. In association with DDB1 and SKP2 probably is involved in ubiquitination of CDKN1B/p27kip. Is involved in ubiquitination of HOXA9. The DDB1-CUL4A-DTL E3 ligase complex regulates the circadian clock function by mediating the ubiquitination and degradation of CRY1. The DCX(ERCC8) complex (also named CSA complex) plays a role in transcription-coupled repair (TCR). A number of DCX complexes (containing either TRPC4AP or DCAF12 as substrate-recognition component) are part of the DesCEND (destruction via C-end degrons) pathway, which recognizes a C-degron located at the extreme C terminus of target proteins, leading to their ubiquitination and degradation. The DCX(AMBRA1) complex is a master regulator of the transition from G1 to S cell phase by mediating ubiquitination of phosphorylated cyclin-D (CCND1, CCND2 and CCND3). The DCX(AMBRA1) complex also acts as a regulator of Cul5-RING (CRL5) E3 ubiquitin-protein ligase complexes by mediating ubiquitination and degradation of Elongin-C (ELOC) component of CRL5 complexes. With CUL4B, contributes to ribosome biogenesis. This chain is Cullin-4A, found in Homo sapiens (Human).